The sequence spans 734 residues: Photosystem I P700 chlorophyll a apoprotein A2 (734 aa).

8 helical membrane-spanning segments follow: residues 46 to 69 (IFAS…FHVA), 135 to 158 (LYTG…LHLQ), 175 to 199 (LNHH…HVAI), 273 to 291 (IAHH…GHMY), 330 to 353 (IHFQ…QHMY), 369 to 395 (AALY…IFFI), 417 to 439 (AIIS…LYVH), and 517 to 535 (FLVH…LILV). [4Fe-4S] cluster is bound by residues Cys559 and Cys568. A run of 2 helical transmembrane segments spans residues 575-596 (AFYL…YWHW) and 643-665 (LSVW…MFLI). Chlorophyll a contacts are provided by His654, Met662, and Tyr670. Trp671 is a binding site for phylloquinone. The helical transmembrane segment at 707-727 (LVGLAHFSVGYIFTYAAFLIA) threads the bilayer.

This sequence belongs to the PsaA/PsaB family. As to quaternary structure, the PsaA/B heterodimer binds the P700 chlorophyll special pair and subsequent electron acceptors. PSI consists of a core antenna complex that captures photons, and an electron transfer chain that converts photonic excitation into a charge separation. The eukaryotic PSI reaction center is composed of at least 11 subunits. P700 is a chlorophyll a/chlorophyll a' dimer, A0 is one or more chlorophyll a, A1 is one or both phylloquinones and FX is a shared 4Fe-4S iron-sulfur center. serves as cofactor.

It localises to the plastid. The protein localises to the chloroplast thylakoid membrane. It catalyses the reaction reduced [plastocyanin] + hnu + oxidized [2Fe-2S]-[ferredoxin] = oxidized [plastocyanin] + reduced [2Fe-2S]-[ferredoxin]. Its function is as follows. PsaA and PsaB bind P700, the primary electron donor of photosystem I (PSI), as well as the electron acceptors A0, A1 and FX. PSI is a plastocyanin-ferredoxin oxidoreductase, converting photonic excitation into a charge separation, which transfers an electron from the donor P700 chlorophyll pair to the spectroscopically characterized acceptors A0, A1, FX, FA and FB in turn. Oxidized P700 is reduced on the lumenal side of the thylakoid membrane by plastocyanin. The sequence is that of Photosystem I P700 chlorophyll a apoprotein A2 from Dioscorea elephantipes (Elephant's foot yam).